We begin with the raw amino-acid sequence, 571 residues long: Proline--tRNA ligase (571 aa).

The protein belongs to the class-II aminoacyl-tRNA synthetase family. ProS type 1 subfamily. Homodimer.

It localises to the cytoplasm. The enzyme catalyses tRNA(Pro) + L-proline + ATP = L-prolyl-tRNA(Pro) + AMP + diphosphate. Functionally, catalyzes the attachment of proline to tRNA(Pro) in a two-step reaction: proline is first activated by ATP to form Pro-AMP and then transferred to the acceptor end of tRNA(Pro). As ProRS can inadvertently accommodate and process non-cognate amino acids such as alanine and cysteine, to avoid such errors it has two additional distinct editing activities against alanine. One activity is designated as 'pretransfer' editing and involves the tRNA(Pro)-independent hydrolysis of activated Ala-AMP. The other activity is designated 'posttransfer' editing and involves deacylation of mischarged Ala-tRNA(Pro). The misacylated Cys-tRNA(Pro) is not edited by ProRS. The polypeptide is Proline--tRNA ligase (Haemophilus ducreyi (strain 35000HP / ATCC 700724)).